Consider the following 339-residue polypeptide: Ketol-acid reductoisomerase (NADP(+)) (339 aa).

In terms of domain architecture, KARI N-terminal Rossmann spans 1 to 182 (MRVYYDRDAD…GGGRSGVIET (182 aa)). NADP(+) is bound by residues 24–27 (YGSQ), arginine 48, serine 51, threonine 53, and 83–86 (DELQ). Residue histidine 108 is part of the active site. Glycine 134 serves as a coordination point for NADP(+). The region spanning 183–328 (TFKEECETDL…EKLRGMMPWI (146 aa)) is the KARI C-terminal knotted domain. The Mg(2+) site is built by aspartate 191, glutamate 195, glutamate 227, and glutamate 231. Serine 252 contributes to the substrate binding site.

This sequence belongs to the ketol-acid reductoisomerase family. It depends on Mg(2+) as a cofactor.

It catalyses the reaction (2R)-2,3-dihydroxy-3-methylbutanoate + NADP(+) = (2S)-2-acetolactate + NADPH + H(+). The enzyme catalyses (2R,3R)-2,3-dihydroxy-3-methylpentanoate + NADP(+) = (S)-2-ethyl-2-hydroxy-3-oxobutanoate + NADPH + H(+). It participates in amino-acid biosynthesis; L-isoleucine biosynthesis; L-isoleucine from 2-oxobutanoate: step 2/4. The protein operates within amino-acid biosynthesis; L-valine biosynthesis; L-valine from pyruvate: step 2/4. Functionally, involved in the biosynthesis of branched-chain amino acids (BCAA). Catalyzes an alkyl-migration followed by a ketol-acid reduction of (S)-2-acetolactate (S2AL) to yield (R)-2,3-dihydroxy-isovalerate. In the isomerase reaction, S2AL is rearranged via a Mg-dependent methyl migration to produce 3-hydroxy-3-methyl-2-ketobutyrate (HMKB). In the reductase reaction, this 2-ketoacid undergoes a metal-dependent reduction by NADPH to yield (R)-2,3-dihydroxy-isovalerate. This chain is Ketol-acid reductoisomerase (NADP(+)), found in Brucella anthropi (strain ATCC 49188 / DSM 6882 / CCUG 24695 / JCM 21032 / LMG 3331 / NBRC 15819 / NCTC 12168 / Alc 37) (Ochrobactrum anthropi).